The primary structure comprises 396 residues: MPNTPSPLALTQGLIRCPSVTPAEGGALSLLADLLGAAGFSVERPVFSEPGTPDVENLYARIGTAGPCLLLAGHTDVVPPGDLAAWRHDPFGGVVEEGEVHGRGAVDMKGGIACLAAAILAFLAERGPDFGGSIAFLITGDEEGPAVNGTVKLLAWARQKGERFDHCILAEPTNPDRLGDMIKIGRRGSLTAALTVHGVQGHVAYPHRAENPIPGLIRLAGALLAAPLDAGTAHFDASNLEFTTVDVGNPASNVIPAEARAVFNIRFNDLWTPATLEAELRRRLDAAAGNAVRYTLAVQPTNAVAFLTQPDPFVDLVTAAIEAETGRRPALSTTGGTSDARFIKDACPVIEFGLVGQTMHQIDERAALADLDRLTAIFRRVLDAYFPGDAALQKRA.

His-74 serves as a coordination point for Zn(2+). The active site involves Asp-76. Asp-107 lines the Zn(2+) pocket. Glu-142 serves as the catalytic Proton acceptor. 3 residues coordinate Zn(2+): Glu-143, Glu-171, and His-360.

It belongs to the peptidase M20A family. DapE subfamily. In terms of assembly, homodimer. It depends on Zn(2+) as a cofactor. Requires Co(2+) as cofactor.

It catalyses the reaction N-succinyl-(2S,6S)-2,6-diaminopimelate + H2O = (2S,6S)-2,6-diaminopimelate + succinate. The protein operates within amino-acid biosynthesis; L-lysine biosynthesis via DAP pathway; LL-2,6-diaminopimelate from (S)-tetrahydrodipicolinate (succinylase route): step 3/3. In terms of biological role, catalyzes the hydrolysis of N-succinyl-L,L-diaminopimelic acid (SDAP), forming succinate and LL-2,6-diaminopimelate (DAP), an intermediate involved in the bacterial biosynthesis of lysine and meso-diaminopimelic acid, an essential component of bacterial cell walls. This chain is Succinyl-diaminopimelate desuccinylase, found in Methylobacterium nodulans (strain LMG 21967 / CNCM I-2342 / ORS 2060).